The chain runs to 444 residues: C4-dicarboxylate transport protein (444 aa).

Transmembrane regions (helical) follow at residues 7-29, 44-66, 79-101, 143-165, 186-208, 221-243, 291-313, and 353-375; these read LYKS…GHFY, IKLI…IAGM, ALLY…VNVV, IVGA…FGFA, VMFN…AMAF, LGQL…LGAI, VVGL…YLTM, and FIVL…ALIL. The segment at 418 to 444 is disordered; sequence SGGRAISDTREEDDLGVAEGPTPTTVK.

This sequence belongs to the dicarboxylate/amino acid:cation symporter (DAACS) (TC 2.A.23) family.

Its subcellular location is the cell inner membrane. Functionally, responsible for the transport of dicarboxylates such as succinate, fumarate, and malate from the periplasm across the inner membrane. In Pseudomonas chlororaphis (Pseudomonas aureofaciens), this protein is C4-dicarboxylate transport protein.